The primary structure comprises 235 residues: uncharacterized protein (235 aa).

Disordered regions lie at residues 20-64 and 140-164; these read IHPN…LPIK and SQFF…NFDQ. Low complexity-rich tracts occupy residues 30-60 and 140-161; these read NNNN…SNNN and SQFF…NNKN. The stretch at 174–213 forms a coiled coil; the sequence is KYMEFLSDIEQLNSDLKESKDNLESISIEMVLLETRLKGL.

This is an uncharacterized protein from Dictyostelium discoideum (Social amoeba).